The following is a 906-amino-acid chain: Inter-alpha-trypsin inhibitor heavy chain H1 (906 aa).

Residues 1–22 form the signal peptide; the sequence is MGLRGLLCVCLVSLLALQAVAA. The propeptide occupies 23-29; it reads QGSPTRN. Residues 32–161 form the VIT domain; that stretch reads GGKKRMAVDA…KATFRLTYEE (130 aa). An S-linked (Hex...) cysteine glycan is attached at cysteine 55. Serine 124 carries the phosphoserine modification. One can recognise a VWFA domain in the interval 287 to 470; that stretch reads NVVFVIDISS…QQLQGFYEQV (184 aa). Residues threonine 397 and threonine 402 each carry the phosphothreonine modification. Asparagine 583 carries an N-linked (GlcNAc...) asparagine glycan. Serine 643 is a glycosylation site (O-linked (GalNAc...) serine). O-linked (GalNAc...) threonine glycosylation occurs at threonine 648. Aspartate 667 is modified (aspartate 1-(chondroitin 4-sulfate)-ester). Residues 668-906 constitute a propeptide that is removed on maturation; that stretch reads PHFLIHVPQK…HTDYIVPDIF (239 aa). N-linked (GlcNAc...) asparagine glycosylation is present at asparagine 745.

Belongs to the ITIH family. In terms of assembly, I-alpha-I plasma protease inhibitors are assembled from one or two heavy chains (HC) and one light chain, bikunin. Inter-alpha-inhibitor (I-alpha-I) is composed of ITIH1/HC1, ITIH2/HC2 and bikunin. Interacts with TNFAIP6 (via Link and CUB domains). Heavy chains are linked to bikunin via chondroitin 4-sulfate esterified to the alpha-carboxyl of the C-terminal aspartate after propeptide cleavage. In terms of processing, the S-linked glycan is composed of two 6-carbon sugars, possibly Glc or Gal.

It localises to the secreted. May act as a carrier of hyaluronan in serum or as a binding protein between hyaluronan and other matrix protein, including those on cell surfaces in tissues to regulate the localization, synthesis and degradation of hyaluronan which are essential to cells undergoing biological processes. The chain is Inter-alpha-trypsin inhibitor heavy chain H1 (ITIH1) from Bos taurus (Bovine).